The primary structure comprises 213 residues: Histone H1.2 (213 aa).

The span at 1–17 (MSETAPAAPAAAPPAEK) shows a compositional bias: low complexity. Residues 1 to 41 (MSETAPAAPAAAPPAEKAPVKKKAAKKAGGTPRKASGPPVS) form a disordered region. Ser-2 is subject to N-acetylserine; partial. The residue at position 2 (Ser-2) is a Phosphoserine. N6-acetyllysine is present on Lys-17. Residues Lys-23, Lys-26, and Lys-27 each carry the N6-(2-hydroxyisobutyryl)lysine modification. At Lys-34 the chain carries N6-(beta-hydroxybutyryl)lysine; alternate. Lys-34 carries the N6-crotonyllysine; alternate modification. Lys-34 bears the N6-methyllysine; alternate mark. The region spanning 36 to 109 (SGPPVSELIT…GASGSFKLNK (74 aa)) is the H15 domain. At Lys-46 the chain carries N6-(2-hydroxyisobutyryl)lysine. The residue at position 52 (Lys-52) is an N6-(beta-hydroxybutyryl)lysine; alternate. Lys-52 is subject to N6-(2-hydroxyisobutyryl)lysine; alternate. A Citrulline modification is found at Arg-54. Lys-63 carries the post-translational modification N6-(2-hydroxyisobutyryl)lysine. N6-(beta-hydroxybutyryl)lysine; alternate is present on Lys-64. Position 64 is an N6-crotonyllysine; alternate (Lys-64). Lys-64 carries the N6-(2-hydroxyisobutyryl)lysine; alternate modification. N6-(2-hydroxyisobutyryl)lysine is present on residues Lys-75 and Lys-81. Residues Lys-85 and Lys-90 each carry the N6-(beta-hydroxybutyryl)lysine; alternate modification. 3 positions are modified to N6-crotonyllysine; alternate: Lys-85, Lys-90, and Lys-97. Residues Lys-85, Lys-90, and Lys-97 each carry the N6-(2-hydroxyisobutyryl)lysine; alternate modification. Residues 92–213 (TLVQTKGTGA…KPKKAAPKKK (122 aa)) form a disordered region. Lys-97 carries the N6-succinyllysine; alternate modification. Ser-104 bears the Phosphoserine; by PKC mark. Lys-106 carries the N6-(beta-hydroxybutyryl)lysine modification. 5 positions are modified to N6-(2-hydroxyisobutyryl)lysine: Lys-110, Lys-117, Lys-121, Lys-129, and Lys-136. Over residues 119-140 (KVKKAGGTKPKKPVGAAKKPKK) the composition is skewed to basic residues. Position 146 is a phosphothreonine (Thr-146). Lys-148 is subject to N6-(2-hydroxyisobutyryl)lysine. Basic residues predominate over residues 149-160 (KSAKKTPKKAKK). N6-crotonyllysine; alternate occurs at positions 159 and 168. 2 positions are modified to N6-(2-hydroxyisobutyryl)lysine; alternate: Lys-159 and Lys-168. The segment covering 169-186 (KVAKSPKKAKVAKPKKAA) has biased composition (basic residues). Position 187 is an N6-methyllysine; by EHMT1 and EHMT2 (Lys-187). Ser-188 carries the ADP-ribosylserine modification. Basic residues predominate over residues 193–213 (VKPKAAKPKVVKPKKAAPKKK). Position 213 is an N6-(2-hydroxyisobutyryl)lysine (Lys-213).

This sequence belongs to the histone H1/H5 family. Interacts with TSC22D1 isoforms 2 and 5. Post-translationally, H1 histones are progressively phosphorylated during the cell cycle, becoming maximally phosphorylated during late G2 phase and M phase, and being dephosphorylated sharply thereafter. In terms of processing, crotonylation (Kcr) is specifically present in male germ cells and marks testis-specific genes in post-meiotic cells, including X-linked genes that escape sex chromosome inactivation in haploid cells. Crotonylation marks active promoters and enhancers and confers resistance to transcriptional repressors. It is also associated with post-meiotically activated genes on autosomes. Citrullination at Arg-54 (H1R54ci) by PADI4 takes place within the DNA-binding site of H1 and results in its displacement from chromatin and global chromatin decondensation, thereby promoting pluripotency and stem cell maintenance. Post-translationally, ADP-ribosylated on Ser-188 in response to DNA damage.

The protein localises to the nucleus. Its subcellular location is the chromosome. Functionally, histone H1 protein binds to linker DNA between nucleosomes forming the macromolecular structure known as the chromatin fiber. Histones H1 are necessary for the condensation of nucleosome chains into higher-order structured fibers. Also acts as a regulator of individual gene transcription through chromatin remodeling, nucleosome spacing and DNA methylation. The protein is Histone H1.2 of Homo sapiens (Human).